Here is a 308-residue protein sequence, read N- to C-terminus: Ornithine carbamoyltransferase (308 aa).

Residues 56–59 (STRT), Q83, R107, and 134–137 (HPCQ) contribute to the carbamoyl phosphate site. Residues N165, D225, and 229-230 (SM) each bind L-ornithine. Residues 264–265 (CL) and R292 contribute to the carbamoyl phosphate site.

It belongs to the aspartate/ornithine carbamoyltransferase superfamily. OTCase family.

It localises to the cytoplasm. It carries out the reaction carbamoyl phosphate + L-ornithine = L-citrulline + phosphate + H(+). It functions in the pathway amino-acid biosynthesis; L-arginine biosynthesis; L-arginine from L-ornithine and carbamoyl phosphate: step 1/3. In terms of biological role, reversibly catalyzes the transfer of the carbamoyl group from carbamoyl phosphate (CP) to the N(epsilon) atom of ornithine (ORN) to produce L-citrulline. This is Ornithine carbamoyltransferase from Nitrobacter winogradskyi (strain ATCC 25391 / DSM 10237 / CIP 104748 / NCIMB 11846 / Nb-255).